The primary structure comprises 333 residues: Adenosine deaminase (333 aa).

Residues His-12 and His-14 each contribute to the Zn(2+) site. Positions 14, 16, and 170 each coordinate substrate. A Zn(2+)-binding site is contributed by His-197. Glu-200 serves as the catalytic Proton donor. Asp-278 contacts Zn(2+). A substrate-binding site is contributed by Asp-279.

The protein belongs to the metallo-dependent hydrolases superfamily. Adenosine and AMP deaminases family. Adenosine deaminase subfamily. Zn(2+) serves as cofactor.

The enzyme catalyses adenosine + H2O + H(+) = inosine + NH4(+). The catalysed reaction is 2'-deoxyadenosine + H2O + H(+) = 2'-deoxyinosine + NH4(+). Functionally, catalyzes the hydrolytic deamination of adenosine and 2-deoxyadenosine. This Pseudoalteromonas translucida (strain TAC 125) protein is Adenosine deaminase.